An 802-amino-acid polypeptide reads, in one-letter code: Vacuolar membrane protease (802 aa).

Topologically, residues 1 to 13 are cytoplasmic; that stretch reads MARYNPLAFTSGP. The chain crosses the membrane as a helical span at residues 14–34; sequence VVFFITITYTALLIALLLTHL. Residues 35–357 lie on the Vacuolar side of the membrane; that stretch reads TLPSYPSHPP…KVFIVFQLHT (323 aa). Residues asparagine 48, asparagine 102, asparagine 105, and asparagine 112 are each glycosylated (N-linked (GlcNAc...) asparagine). The Zn(2+) site is built by histidine 152 and aspartate 164. The Proton acceptor role is filled by glutamate 198. Zn(2+)-binding residues include glutamate 199, glutamate 224, and histidine 297. Residues 358 to 378 traverse the membrane as a helical segment; the sequence is FFALCVTLLVVAPLTLIGLAW. Residues 379–389 lie on the Cytoplasmic side of the membrane; that stretch reads SLHKADRNYLF. The helical transmembrane segment at 390-409 threads the bilayer; sequence ARKAFVYSADDDEPIHLYGW. The Vacuolar portion of the chain corresponds to 410–423; that stretch reads RGFFRFPIAFGIAT. Residues 424-444 form a helical membrane-spanning segment; that stretch reads SIVVGLAMMLSAWFAVSWFLL. Topologically, residues 445 to 457 are cytoplasmic; the sequence is HGADAMRPSALQR. Residues 458-478 form a helical membrane-spanning segment; that stretch reads MYSLLWLFIGSFCLLVFFTIL. The Vacuolar portion of the chain corresponds to 479–490; it reads ANNHQVAAGYPS. Residues 491 to 511 form a helical membrane-spanning segment; sequence LFCFATVFLANVLSFLELFLA. Residues 512-609 are Cytoplasmic-facing; that stretch reads PPKSAYAWNV…EQEWSGKLPS (98 aa). Disordered regions lie at residues 528–554 and 570–603; these read GSRPLTSSATAARSDNRATTDDDATET and AGRRDAINEGANSQEPESRRRLDLGQPHSGEQEW. Residues 610–630 form a helical membrane-spanning segment; it reads WIWIVQFSLLAPMIVILVGQI. Over 631–649 the chain is Vacuolar; it reads ALLLTSALYQTPSDGNSPL. The chain crosses the membrane as a helical span at residues 650–670; the sequence is YIYTSIAALAVFLVAPIGPFI. Residues 671–677 lie on the Cytoplasmic side of the membrane; sequence HRFTHHV. A helical membrane pass occupies residues 678-698; that stretch reads PTFLFLLCVATTIYNLVAFPF. The Vacuolar segment spans residues 699–802; sequence SEQHKLKVYF…HDDSNNRGRR (104 aa). 2 N-linked (GlcNAc...) asparagine glycosylation sites follow: asparagine 746 and asparagine 779.

This sequence belongs to the peptidase M28 family. It depends on Zn(2+) as a cofactor.

The protein localises to the vacuole membrane. In terms of biological role, may be involved in vacuolar sorting and osmoregulation. The sequence is that of Vacuolar membrane protease from Leptosphaeria maculans (strain JN3 / isolate v23.1.3 / race Av1-4-5-6-7-8) (Blackleg fungus).